A 30-amino-acid chain; its full sequence is AEVLMDFPQLTMTLPDGREESVMKRTTLVA.

This sequence belongs to the ATPase alpha/beta chains family. In terms of assembly, V-ATPase is a heteromultimeric enzyme composed of a peripheral catalytic V1 complex (main components: subunits A, B, C, D, E, and F) attached to an integral membrane V0 proton pore complex (main component: the proteolipid protein).

The enzyme catalyses ATP + H2O + 4 H(+)(in) = ADP + phosphate + 5 H(+)(out). Its function is as follows. Catalytic subunit of the peripheral V1 complex of vacuolar ATPase. V-ATPase vacuolar ATPase is responsible for acidifying a variety of intracellular compartments in eukaryotic cells. This chain is V-type proton ATPase catalytic subunit A isoform 1, found in Psilotum nudum (Whisk fern).